Reading from the N-terminus, the 405-residue chain is Probable tRNA sulfurtransferase (405 aa).

The 106-residue stretch at 60–165 folds into the THUMP domain; that stretch reads DKVMGRLKLV…LNGIFLSSET (106 aa). ATP contacts are provided by residues 183 to 184, 208 to 209, Arg265, Gly287, and Gln296; these read ML and HF.

It belongs to the ThiI family.

Its subcellular location is the cytoplasm. It catalyses the reaction [ThiI sulfur-carrier protein]-S-sulfanyl-L-cysteine + a uridine in tRNA + 2 reduced [2Fe-2S]-[ferredoxin] + ATP + H(+) = [ThiI sulfur-carrier protein]-L-cysteine + a 4-thiouridine in tRNA + 2 oxidized [2Fe-2S]-[ferredoxin] + AMP + diphosphate. It carries out the reaction [ThiS sulfur-carrier protein]-C-terminal Gly-Gly-AMP + S-sulfanyl-L-cysteinyl-[cysteine desulfurase] + AH2 = [ThiS sulfur-carrier protein]-C-terminal-Gly-aminoethanethioate + L-cysteinyl-[cysteine desulfurase] + A + AMP + 2 H(+). It functions in the pathway cofactor biosynthesis; thiamine diphosphate biosynthesis. Its function is as follows. Catalyzes the ATP-dependent transfer of a sulfur to tRNA to produce 4-thiouridine in position 8 of tRNAs, which functions as a near-UV photosensor. Also catalyzes the transfer of sulfur to the sulfur carrier protein ThiS, forming ThiS-thiocarboxylate. This is a step in the synthesis of thiazole, in the thiamine biosynthesis pathway. The sulfur is donated as persulfide by IscS. The protein is Probable tRNA sulfurtransferase of Lactiplantibacillus plantarum (strain ATCC BAA-793 / NCIMB 8826 / WCFS1) (Lactobacillus plantarum).